Consider the following 827-residue polypeptide: Putative transcriptional regulatory protein C16G5.16 (827 aa).

A DNA-binding region (zn(2)-C6 fungal-type) is located at residues 16–42 (CDECHRRKIKCDQRRPCSNCIAYNYEC). Disordered stretches follow at residues 80–114 (LKLP…SSQD), 158–193 (TVPN…HKKP), and 794–827 (QPPS…KRTE). A compositionally biased stretch (basic and acidic residues) spans 102–112 (KRSDSSKRSSS). Residue S112 is modified to Phosphoserine. Composition is skewed to low complexity over residues 159-179 (VPNP…LSFP) and 811-827 (SNNS…KRTE).

Belongs to the ASG1 family.

Its subcellular location is the cytoplasm. It localises to the nucleus. The sequence is that of Putative transcriptional regulatory protein C16G5.16 from Schizosaccharomyces pombe (strain 972 / ATCC 24843) (Fission yeast).